Here is a 222-residue protein sequence, read N- to C-terminus: MTLFSDSARLHPGEINSLVAHTKPVWWSLHTDAHEIWCRDSDRGTSLGRSIPCPPALCSVRKIHLRPQVLRPTSPRNISPISNPVSGLFLLCSPTSLTIPQPLSPFNLGATLQSLPSLNFNSFHSLVETKETCFIREPKTPAPVTDWEGSLPLVFNHCRDASLISRFRPRRDACLGPSPLAASPAFLGQGQVPLNPFSFTLSGKSRFSGAGASTPQPLLLHP.

As to expression, expressed only in fetal ovary and in undifferentiated ES cells.

The protein localises to the nucleus. In Homo sapiens (Human), this protein is Embryonic stem cell-related gene protein (ESRG).